The sequence spans 418 residues: Tektin-1 (418 aa).

Coiled coils occupy residues 21 to 107 (KNQY…TLKE), 134 to 177 (HELI…DLKD), 266 to 308 (NGLK…DQEG), and 333 to 384 (AQYR…NTIY).

Belongs to the tektin family. Microtubule inner protein component of sperm flagellar doublet microtubules. Ubiquitinated, leading to its degradation. Deubiquitinated by USP16, promoting its stability. As to expression, predominantly expressed in testis. Expressed in airway epithelial cells.

It localises to the cytoplasm. Its subcellular location is the cytoskeleton. The protein localises to the cilium axoneme. The protein resides in the flagellum axoneme. Microtubule inner protein (MIP) part of the dynein-decorated doublet microtubules (DMTs) in cilia and flagellar axoneme. Forms filamentous polymers in the walls of ciliary and flagellar microtubules. The sequence is that of Tektin-1 (TEKT1) from Homo sapiens (Human).